The primary structure comprises 332 residues: Fructose-1,6-bisphosphatase class 1 (332 aa).

Mg(2+)-binding residues include Glu94, Asp116, Leu118, and Asp119. Substrate contacts are provided by residues 119–122 (DGSS), Asn211, Tyr239, 257–259 (YLY), and Lys269. Glu275 contributes to the Mg(2+) binding site.

Belongs to the FBPase class 1 family. As to quaternary structure, homotetramer. Requires Mg(2+) as cofactor.

The protein resides in the cytoplasm. The catalysed reaction is beta-D-fructose 1,6-bisphosphate + H2O = beta-D-fructose 6-phosphate + phosphate. It participates in carbohydrate biosynthesis; Calvin cycle. The protein is Fructose-1,6-bisphosphatase class 1 of Synechococcus sp. (strain JA-3-3Ab) (Cyanobacteria bacterium Yellowstone A-Prime).